The primary structure comprises 303 residues: Probable 5-dehydro-4-deoxyglucarate dehydratase (303 aa).

It belongs to the DapA family.

The enzyme catalyses 5-dehydro-4-deoxy-D-glucarate + H(+) = 2,5-dioxopentanoate + CO2 + H2O. Its pathway is carbohydrate acid metabolism; D-glucarate degradation; 2,5-dioxopentanoate from D-glucarate: step 2/2. This Delftia acidovorans (strain DSM 14801 / SPH-1) protein is Probable 5-dehydro-4-deoxyglucarate dehydratase.